We begin with the raw amino-acid sequence, 810 residues long: Phenylalanine--tRNA ligase beta subunit (810 aa).

The tRNA-binding domain maps to 40–153 (KLPDQKVIVG…EACEIGQPLA (114 aa)). The B5 domain occupies 399–480 (AAQKIVSLRP…RLYGYNNLEP (82 aa)). 4 residues coordinate Mg(2+): Asp458, Asp464, Glu467, and Glu468. In terms of domain architecture, FDX-ACB spans 714-808 (SKFPVVERDL…ARSELGAVIR (95 aa)).

It belongs to the phenylalanyl-tRNA synthetase beta subunit family. Type 1 subfamily. As to quaternary structure, tetramer of two alpha and two beta subunits. Requires Mg(2+) as cofactor.

Its subcellular location is the cytoplasm. The enzyme catalyses tRNA(Phe) + L-phenylalanine + ATP = L-phenylalanyl-tRNA(Phe) + AMP + diphosphate + H(+). This Chlorobaculum tepidum (strain ATCC 49652 / DSM 12025 / NBRC 103806 / TLS) (Chlorobium tepidum) protein is Phenylalanine--tRNA ligase beta subunit.